A 115-amino-acid polypeptide reads, in one-letter code: MVAAKKTKKSLESINSRLQLVMKSGKYVLGYKQSLKMIRQGKAKLVILANNCPALRKSEIEYYAMLAKTGVHHYSGNNIELGTACGKYYRVCTLSIIDPGDSDIIRSMPEQTGEK.

Phosphoserine occurs at positions 10 and 16. Lys-26 is modified (N6-acetyllysine; alternate). Residue Lys-26 forms a Glycyl lysine isopeptide (Lys-Gly) (interchain with G-Cter in SUMO2); alternate linkage.

This sequence belongs to the eukaryotic ribosomal protein eL30 family. As to quaternary structure, component of the large ribosomal subunit.

The protein localises to the cytoplasm. In terms of biological role, component of the large ribosomal subunit. The ribosome is a large ribonucleoprotein complex responsible for the synthesis of proteins in the cell. In Oryctolagus cuniculus (Rabbit), this protein is Large ribosomal subunit protein eL30 (RPL30).